Here is a 199-residue protein sequence, read N- to C-terminus: Protein GrpE (199 aa).

Positions 1 to 24 (MSKQNKKDWKKFKDEHKEEHKVEN) are enriched in basic and acidic residues. The interval 1-52 (MSKQNKKDWKKFKDEHKEEHKVENEILEEETDEESQHQEPALGHPSYTALEE) is disordered.

This sequence belongs to the GrpE family. Homodimer.

It is found in the cytoplasm. Participates actively in the response to hyperosmotic and heat shock by preventing the aggregation of stress-denatured proteins, in association with DnaK and GrpE. It is the nucleotide exchange factor for DnaK and may function as a thermosensor. Unfolded proteins bind initially to DnaJ; upon interaction with the DnaJ-bound protein, DnaK hydrolyzes its bound ATP, resulting in the formation of a stable complex. GrpE releases ADP from DnaK; ATP binding to DnaK triggers the release of the substrate protein, thus completing the reaction cycle. Several rounds of ATP-dependent interactions between DnaJ, DnaK and GrpE are required for fully efficient folding. The protein is Protein GrpE of Legionella pneumophila.